A 778-amino-acid chain; its full sequence is Endonuclease MutS2 (778 aa).

ATP is bound at residue 332 to 339 (GPNTGGKT). The Smr domain maps to 703–778 (IDLRGKMVDE…GLGCTVVTLK (76 aa)).

Belongs to the DNA mismatch repair MutS family. MutS2 subfamily. In terms of assembly, homodimer. Binds to stalled ribosomes, contacting rRNA.

Its function is as follows. Endonuclease that is involved in the suppression of homologous recombination and thus may have a key role in the control of bacterial genetic diversity. In terms of biological role, acts as a ribosome collision sensor, splitting the ribosome into its 2 subunits. Detects stalled/collided 70S ribosomes which it binds and splits by an ATP-hydrolysis driven conformational change. Acts upstream of the ribosome quality control system (RQC), a ribosome-associated complex that mediates the extraction of incompletely synthesized nascent chains from stalled ribosomes and their subsequent degradation. Probably generates substrates for RQC. The polypeptide is Endonuclease MutS2 (Fusobacterium nucleatum subsp. nucleatum (strain ATCC 25586 / DSM 15643 / BCRC 10681 / CIP 101130 / JCM 8532 / KCTC 2640 / LMG 13131 / VPI 4355)).